The sequence spans 780 residues: Cyclin-F (780 aa).

A Nuclear localization signal 1 motif is present at residues 20 to 28 (KRRIKRRPR). One can recognise an F-box domain in the interval 29-76 (NLTILSLPEDVLFHILKWLSVGDILAVRAVHSHLKYLVDNHASVWASA). The Cyclin N-terminal domain occupies 288-405 (QASQAVNKQQ…EIISALEGKI (118 aa)). 3 short sequence motifs (d box) span residues 310–313 (RYIL), 343–346 (RRRL), and 349–352 (RYKL). Disordered regions lie at residues 544 to 594 (QESP…AELS), 651 to 733 (QESS…STKP), and 745 to 780 (CRPP…FLKL). Positions 568-574 (RRSKRKR) match the Nuclear localization signal 2 motif. The interval 582 to 761 (RGSFVTTPTA…ESGAHQQPVK (180 aa)) is PEST. Positions 585–594 (FVTTPTAELS) are enriched in polar residues. Composition is skewed to low complexity over residues 695-708 (SGYS…PISS) and 719-731 (STSV…HSST). The short motif at 762–765 (RQNL) is the D box 4 element.

It belongs to the cyclin family. Cyclin AB subfamily. As to quaternary structure, component of the SCF(CCNF) complex consisting of CUL1, RBX1, SKP1 and CCNF. Interacts with SKP1. Interacts with CUL1. Interacts with CCNB1; interaction is required for nuclear localization of CCNB1. Interacts with CCP110; this interaction leads to CCP110 ubiquitination and degradation via the proteasome pathway. Interacts (via the Cyclin N-terminal domain) with MYBL2/BMYB. Interacts with FZR1/CDH1 (via N-terminus). Interacts with RRM2 (via Cy motif and when phosphorylated at 'Thr-33'); the interaction occurs exclusively in G2 and early M. Interacts with CDC6 (via Cy motif); the interaction takes place during G2 and M phase. Post-translationally, degraded when the spindle assembly checkpoint is activated during the G2-M transition. Degradation is not dependent on the proteasome or ubiquitin and depends on the C-terminal PEST sequence. Phosphorylated just before cells enter into mitosis. In terms of processing, ubiquitinated by the anaphase-promoting complex (APC/C); leading to its degradation by the proteasome.

The protein resides in the nucleus. It localises to the cytoplasm. It is found in the perinuclear region. Its subcellular location is the cytoskeleton. The protein localises to the microtubule organizing center. The protein resides in the centrosome. It localises to the centriole. In terms of biological role, substrate recognition component of a SCF (SKP1-CUL1-F-box protein) E3 ubiquitin-protein ligase complex which mediates the ubiquitination and subsequent proteasomal degradation of target proteins. The SCF(CCNF) E3 ubiquitin-protein ligase complex is an integral component of the ubiquitin proteasome system (UPS) and links proteasome degradation to the cell cycle. Mediates the substrate recognition and the proteasomal degradation of various target proteins involved in the regulation of cell cycle progression and in the maintenance of genome stability. Mediates the ubiquitination and subsequent proteasomal degradation of CP110 during G2 phase, thereby acting as an inhibitor of centrosome reduplication. In G2, mediates the ubiquitination and proteasomal degradation of CDC6, thereby suppressing DNA re-replication and preventing genome instability. Involved in the ubiquitination and degradation of the substrate adapter CDH1 of the anaphase-promoting complex (APC/C), thereby acting as an antagonist of APC/C in regulating G1 progression and S phase entry. May play a role in the G2 cell cycle checkpoint control after DNA damage, possibly by promoting the ubiquitination of MYBL2/BMYB. The protein is Cyclin-F (Ccnf) of Rattus norvegicus (Rat).